Consider the following 597-residue polypeptide: Alpha-1,2-mannosyltransferase MNN2 (597 aa).

The Cytoplasmic segment spans residues 1–6 (MIAKQK). A helical membrane pass occupies residues 7–27 (IKILIGVIIVIATYHFIVSSN). Topologically, residues 28–597 (VRSKDLSDLV…ETAEIPTVVS (570 aa)) are extracellular. Positions 39–89 (LGSSDKSTTENERPKNNIVTNNRLDNPPNEDIPHAEPDSPPQEPPKSGNKP) are disordered. A glycan (N-linked (GlcNAc...) asparagine) is linked at Asn382.

The protein belongs to the MNN1/MNT family. The cofactor is Mn(2+).

The protein localises to the golgi apparatus membrane. The protein operates within protein modification; protein glycosylation. Enzyme activity is regulated by iron. Alpha-1,2-mannosyltransferase required for cell wall integrity. Responsible for addition of the first alpha-1,2-linked mannose to form the branches on the mannan backbone of oligosaccharides. Addition of alpha-1,2-mannose is required for stabilization of the alpha-1,6-mannose backbone and hence regulates mannan fibril length; and is important for both immune recognition and virulence. Promotes iron uptake and usage along the endocytosis pathway under iron-limiting conditions. The chain is Alpha-1,2-mannosyltransferase MNN2 (MNN2) from Candida albicans (strain SC5314 / ATCC MYA-2876) (Yeast).